Reading from the N-terminus, the 95-residue chain is Aspartyl/glutamyl-tRNA(Asn/Gln) amidotransferase subunit C (95 aa).

Belongs to the GatC family. As to quaternary structure, heterotrimer of A, B and C subunits.

It carries out the reaction L-glutamyl-tRNA(Gln) + L-glutamine + ATP + H2O = L-glutaminyl-tRNA(Gln) + L-glutamate + ADP + phosphate + H(+). It catalyses the reaction L-aspartyl-tRNA(Asn) + L-glutamine + ATP + H2O = L-asparaginyl-tRNA(Asn) + L-glutamate + ADP + phosphate + 2 H(+). Functionally, allows the formation of correctly charged Asn-tRNA(Asn) or Gln-tRNA(Gln) through the transamidation of misacylated Asp-tRNA(Asn) or Glu-tRNA(Gln) in organisms which lack either or both of asparaginyl-tRNA or glutaminyl-tRNA synthetases. The reaction takes place in the presence of glutamine and ATP through an activated phospho-Asp-tRNA(Asn) or phospho-Glu-tRNA(Gln). This Dinoroseobacter shibae (strain DSM 16493 / NCIMB 14021 / DFL 12) protein is Aspartyl/glutamyl-tRNA(Asn/Gln) amidotransferase subunit C.